A 164-amino-acid polypeptide reads, in one-letter code: Hydroxylaminobenzene mutase HabB (164 aa).

4 helical membrane-spanning segments follow: residues leucine 16 to methionine 36, glycine 50 to glycine 70, phenylalanine 78 to tryptophan 98, and leucine 121 to leucine 141.

It localises to the cell membrane. It carries out the reaction N-phenylhydroxylamine = 2-aminophenol. Its activity is regulated as follows. Addition of ZnSO(4) decreases the activity to 70%. Catalyzes the rearrangement of hydroxylaminobenzene to 2-aminophenol. The polypeptide is Hydroxylaminobenzene mutase HabB (habB) (Ectopseudomonas oleovorans (Pseudomonas oleovorans)).